The primary structure comprises 276 residues: NAD kinase (276 aa).

The Proton acceptor role is filled by Asp67. NAD(+)-binding positions include 67-68, Arg72, 136-137, Lys147, Arg164, Asp166, 177-182, Ala201, and Gln235; these read DG, ND, and TAYALS.

Belongs to the NAD kinase family. A divalent metal cation is required as a cofactor.

It is found in the cytoplasm. It carries out the reaction NAD(+) + ATP = ADP + NADP(+) + H(+). In terms of biological role, involved in the regulation of the intracellular balance of NAD and NADP, and is a key enzyme in the biosynthesis of NADP. Catalyzes specifically the phosphorylation on 2'-hydroxyl of the adenosine moiety of NAD to yield NADP. The chain is NAD kinase from Thermococcus sibiricus (strain DSM 12597 / MM 739).